The following is a 338-amino-acid chain: Bifunctional methylenetetrahydrofolate dehydrogenase/cyclohydrolase 2, mitochondrial (338 aa).

Residues 89 to 93 (YVRNK) and 136 to 138 (VQL) contribute to the substrate site. NAD(+) contacts are provided by residues 205 to 207 (GRS) and Arg238. A substrate-binding site is contributed by 314–318 (PGGVG).

This sequence belongs to the tetrahydrofolate dehydrogenase/cyclohydrolase family. Requires Mg(2+) as cofactor. Widely expressed.

It is found in the mitochondrion inner membrane. The catalysed reaction is (6R)-5,10-methylene-5,6,7,8-tetrahydrofolate + NADP(+) = (6R)-5,10-methenyltetrahydrofolate + NADPH. The enzyme catalyses (6R)-5,10-methylene-5,6,7,8-tetrahydrofolate + NAD(+) = (6R)-5,10-methenyltetrahydrofolate + NADH. It carries out the reaction (6R)-5,10-methenyltetrahydrofolate + H2O = (6R)-10-formyltetrahydrofolate + H(+). It participates in one-carbon metabolism; tetrahydrofolate interconversion. In terms of biological role, bifunctional mitochondrial folate-interconverting enzyme that has both NAD/NADP-dependent methylenetetrahydrofolate dehydrogenase and methenyltetrahydrofolate cyclohydrolase activities. Its function is as follows. Has no NAD/NADP-dependent methylenetetrahydrofolate dehydrogenase activity. This is Bifunctional methylenetetrahydrofolate dehydrogenase/cyclohydrolase 2, mitochondrial from Rattus norvegicus (Rat).